Here is a 535-residue protein sequence, read N- to C-terminus: Bifunctional purine biosynthesis protein PurH (535 aa).

Residues 6–151 (TRLPVRRALI…KNHKDVAIVV (146 aa)) enclose the MGS-like domain.

Belongs to the PurH family.

The enzyme catalyses (6R)-10-formyltetrahydrofolate + 5-amino-1-(5-phospho-beta-D-ribosyl)imidazole-4-carboxamide = 5-formamido-1-(5-phospho-D-ribosyl)imidazole-4-carboxamide + (6S)-5,6,7,8-tetrahydrofolate. The catalysed reaction is IMP + H2O = 5-formamido-1-(5-phospho-D-ribosyl)imidazole-4-carboxamide. The protein operates within purine metabolism; IMP biosynthesis via de novo pathway; 5-formamido-1-(5-phospho-D-ribosyl)imidazole-4-carboxamide from 5-amino-1-(5-phospho-D-ribosyl)imidazole-4-carboxamide (10-formyl THF route): step 1/1. It functions in the pathway purine metabolism; IMP biosynthesis via de novo pathway; IMP from 5-formamido-1-(5-phospho-D-ribosyl)imidazole-4-carboxamide: step 1/1. The polypeptide is Bifunctional purine biosynthesis protein PurH (Pseudomonas putida (strain ATCC 700007 / DSM 6899 / JCM 31910 / BCRC 17059 / LMG 24140 / F1)).